Here is a 345-residue protein sequence, read N- to C-terminus: Pyruvate dehydrogenase E1 component subunit alpha (345 aa).

As to quaternary structure, heterodimer of an alpha and a beta chain. It depends on thiamine diphosphate as a cofactor.

The catalysed reaction is N(6)-[(R)-lipoyl]-L-lysyl-[protein] + pyruvate + H(+) = N(6)-[(R)-S(8)-acetyldihydrolipoyl]-L-lysyl-[protein] + CO2. The pyruvate dehydrogenase complex catalyzes the overall conversion of pyruvate to acetyl-CoA and CO(2). It contains multiple copies of three enzymatic components: pyruvate dehydrogenase (E1), dihydrolipoamide acetyltransferase (E2) and lipoamide dehydrogenase (E3). This chain is Pyruvate dehydrogenase E1 component subunit alpha (pdhA), found in Acholeplasma laidlawii.